A 193-amino-acid chain; its full sequence is UPF0215 protein PH0071 (193 aa).

Belongs to the UPF0215 family.

This is UPF0215 protein PH0071 from Pyrococcus horikoshii (strain ATCC 700860 / DSM 12428 / JCM 9974 / NBRC 100139 / OT-3).